A 427-amino-acid chain; its full sequence is ATP-sensitive inward rectifier potassium channel 12 (427 aa).

At 1 to 77 (MTASGRTNPY…LADMFTTCVD (77 aa)) the chain is on the cytoplasmic side. Position 75 is an S-nitrosocysteine (C75). The helical transmembrane segment at 78–104 (IRWRYMLLIFSLAFLASWLLFGVIFWV) threads the bilayer. Residues R79 and R81 each coordinate a 1,2-diacyl-sn-glycero-3-phospho-(1D-myo-inositol-4,5-bisphosphate). Residues 105 to 129 (IAVAHGDLEPAEAHGRTPCVLQVHG) lie on the Extracellular side of the membrane. A disulfide bond links C123 and C155. Positions 130 to 146 (FMAAFLFSIETQTTIGY) form an intramembrane region, helical; Pore-forming. Residues T143, I144, G145, and Y146 each contribute to the K(+) site. The short motif at 143-148 (TIGYGL) is the Selectivity filter element. Residues 147-155 (GLRCVTEEC) lie on the Extracellular side of the membrane. A helical membrane pass occupies residues 156-183 (PVAVFMVVAQSIVGCIIDSFMIGAIMAK). Positions 183 and 188 each coordinate a 1,2-diacyl-sn-glycero-3-phospho-(1D-myo-inositol-4,5-bisphosphate). The Cytoplasmic portion of the chain corresponds to 184 to 427 (MARPKKRAQT…QRPYRRESEI (244 aa)). The span at 387–396 (DEEDEVDGEQ) shows a compositional bias: acidic residues. Residues 387 to 427 (DEEDEVDGEQDSLGPQARRDFDRPQAGTALEQRPYRRESEI) form a disordered region. The PDZ-binding signature appears at 425–427 (SEI).

Belongs to the inward rectifier-type potassium channel (TC 1.A.2.1) family. KCNJ12 subfamily. Homotetramer. Forms heteromer with KCNJ4. Association, via its PDZ-recognition domain, with LIN7A, LIN7B, LIN7C, DLG1, CASK and APBA1 plays a key role in its localization and trafficking.

Its subcellular location is the membrane. The catalysed reaction is K(+)(in) = K(+)(out). Its activity is regulated as follows. Activated by phosphatidylinositol 4,5-biphosphate (PtdIns(4,5)P2). PtdIns(4,5)P2 binding to the cytoplasmic side of the channel triggers a conformation change leading to channel opening. In terms of biological role, inward rectifying potassium channel that probably participates in controlling the resting membrane potential in electrically excitable cells. Probably participates in establishing action potential waveform and excitability of neuronal and muscle tissues. Inward rectifier potassium channels are characterized by a greater tendency to allow potassium to flow into the cell rather than out of it. Their voltage dependence is regulated by the concentration of extracellular potassium; as external potassium is raised, the voltage range of the channel opening shifts to more positive voltages. The inward rectification is mainly due to the blockage of outward current by internal magnesium. The protein is ATP-sensitive inward rectifier potassium channel 12 (KCNJ12) of Bos taurus (Bovine).